The sequence spans 282 residues: HTH-type transcriptional activator RhaR (282 aa).

The 99-residue stretch at 179-277 folds into the HTH araC/xylS-type domain; the sequence is DKLITALANS…GMTPSQWRHL (99 aa). DNA-binding regions (H-T-H motif) lie at residues 196–217 and 244–267; these read DAFC…RAQT and ISEI…TRET.

As to quaternary structure, binds DNA as a dimer.

The protein resides in the cytoplasm. Activates expression of the rhaSR operon in response to L-rhamnose. The polypeptide is HTH-type transcriptional activator RhaR (Salmonella agona (strain SL483)).